The primary structure comprises 295 residues: Cbb3-type cytochrome c oxidase subunit CcoP (295 aa).

Topologically, residues 1–31 are cytoplasmic; the sequence is MAQKEKDALSGVETTGHEWDGLRELNNPLPK. A helical transmembrane segment spans residues 32 to 52; it reads WWLYIFYVCIAWSLVYYVLYP. At 53–295 the chain is on the periplasmic side; it reads AWPLGKSYTK…VYVHNLGGGK (243 aa). 2 consecutive Cytochrome c domains span residues 108–200 and 207–292; these read FAMA…LSLN and AAAE…HNLG. Positions 121, 124, 125, 175, 220, 223, 224, and 269 each coordinate heme c.

Belongs to the CcoP / FixP family. As to quaternary structure, component of the cbb3-type cytochrome c oxidase at least composed of CcoN, CcoO, CcoQ and CcoP. Requires heme c as cofactor.

The protein resides in the cell inner membrane. It functions in the pathway energy metabolism; oxidative phosphorylation. C-type cytochrome. Part of the cbb3-type cytochrome c oxidase complex. CcoP subunit is required for transferring electrons from donor cytochrome c via its heme groups to CcoO subunit. From there, electrons are shuttled to the catalytic binuclear center of CcoN subunit where oxygen reduction takes place. The complex also functions as a proton pump. The protein is Cbb3-type cytochrome c oxidase subunit CcoP of Azospirillum brasilense.